The following is a 689-amino-acid chain: Glycine--tRNA ligase beta subunit (689 aa).

This sequence belongs to the class-II aminoacyl-tRNA synthetase family. Tetramer of two alpha and two beta subunits.

It localises to the cytoplasm. The catalysed reaction is tRNA(Gly) + glycine + ATP = glycyl-tRNA(Gly) + AMP + diphosphate. The polypeptide is Glycine--tRNA ligase beta subunit (Pseudoalteromonas translucida (strain TAC 125)).